The sequence spans 262 residues: Acyl-[acyl-carrier-protein]--UDP-N-acetylglucosamine O-acyltransferase (262 aa).

This sequence belongs to the transferase hexapeptide repeat family. LpxA subfamily. In terms of assembly, homotrimer.

The protein localises to the cytoplasm. It catalyses the reaction a (3R)-hydroxyacyl-[ACP] + UDP-N-acetyl-alpha-D-glucosamine = a UDP-3-O-[(3R)-3-hydroxyacyl]-N-acetyl-alpha-D-glucosamine + holo-[ACP]. Its pathway is glycolipid biosynthesis; lipid IV(A) biosynthesis; lipid IV(A) from (3R)-3-hydroxytetradecanoyl-[acyl-carrier-protein] and UDP-N-acetyl-alpha-D-glucosamine: step 1/6. In terms of biological role, involved in the biosynthesis of lipid A, a phosphorylated glycolipid that anchors the lipopolysaccharide to the outer membrane of the cell. The chain is Acyl-[acyl-carrier-protein]--UDP-N-acetylglucosamine O-acyltransferase from Cronobacter sakazakii (strain ATCC BAA-894) (Enterobacter sakazakii).